The following is a 457-amino-acid chain: Cell division protein FtsZ (457 aa).

GTP-binding positions include 26-30 (GGGGN), 115-117 (GTG), glutamate 146, lysine 150, and aspartate 193. The segment covering 429–447 (KKDVVRSEESERPAFESER) has biased composition (basic and acidic residues). The interval 429 to 457 (KKDVVRSEESERPAFESERSSSPTTISFN) is disordered. The span at 448 to 457 (SSSPTTISFN) shows a compositional bias: polar residues.

The protein belongs to the FtsZ family. Homodimer. Polymerizes to form a dynamic ring structure in a strictly GTP-dependent manner. Interacts directly with several other division proteins.

It localises to the cytoplasm. Its function is as follows. Essential cell division protein that forms a contractile ring structure (Z ring) at the future cell division site. The regulation of the ring assembly controls the timing and the location of cell division. One of the functions of the FtsZ ring is to recruit other cell division proteins to the septum to produce a new cell wall between the dividing cells. Binds GTP and shows GTPase activity. This is Cell division protein FtsZ from Porphyromonas gingivalis (strain ATCC BAA-308 / W83).